Consider the following 193-residue polypeptide: Large ribosomal subunit protein uL5 (193 aa).

Belongs to the universal ribosomal protein uL5 family. Part of the 50S ribosomal subunit; part of the 5S rRNA/L5/L18/L25 subcomplex. Contacts the 5S rRNA and the P site tRNA. Forms a bridge to the 30S subunit in the 70S ribosome.

In terms of biological role, this is one of the proteins that bind and probably mediate the attachment of the 5S RNA into the large ribosomal subunit, where it forms part of the central protuberance. In the 70S ribosome it contacts protein S13 of the 30S subunit (bridge B1b), connecting the 2 subunits; this bridge is implicated in subunit movement. Contacts the P site tRNA; the 5S rRNA and some of its associated proteins might help stabilize positioning of ribosome-bound tRNAs. The protein is Large ribosomal subunit protein uL5 of Pseudarthrobacter chlorophenolicus (strain ATCC 700700 / DSM 12829 / CIP 107037 / JCM 12360 / KCTC 9906 / NCIMB 13794 / A6) (Arthrobacter chlorophenolicus).